Consider the following 105-residue polypeptide: Small ribosomal subunit protein uS10 (105 aa).

The protein belongs to the universal ribosomal protein uS10 family. Part of the 30S ribosomal subunit.

Functionally, involved in the binding of tRNA to the ribosomes. This Desulfovibrio desulfuricans (strain ATCC 27774 / DSM 6949 / MB) protein is Small ribosomal subunit protein uS10.